Here is a 900-residue protein sequence, read N- to C-terminus: Probable dipeptidyl-aminopeptidase B (900 aa).

The segment at 1–83 (MARTDQGLGA…DILSHPRDKS (83 aa)) is disordered. The Cytoplasmic portion of the chain corresponds to 1 to 90 (MARTDQGLGA…DKSKRSRGSR (90 aa)). Residues 24-39 (NSFSSTDSLSTDGSLF) show a composition bias toward low complexity. A compositionally biased stretch (polar residues) spans 44–55 (NATQFQKSTQLP). A helical; Signal-anchor for type II membrane protein membrane pass occupies residues 91–111 (WIWVIGLLCLGGWILAFILFW). At 112–900 (GRRNNNSDIS…HHVGSALAAT (789 aa)) the chain is on the vacuolar side. Asn150, Asn195, Asn348, Asn410, Asn514, Asn639, and Asn644 each carry an N-linked (GlcNAc...) asparagine glycan. Ser753 (charge relay system) is an active-site residue. Asn812 carries N-linked (GlcNAc...) asparagine glycosylation. Active-site charge relay system residues include Asp830 and His863.

The protein belongs to the peptidase S9B family.

It localises to the vacuole membrane. The catalysed reaction is Release of an N-terminal dipeptide, Xaa-Yaa-|-Zaa-, from a polypeptide, preferentially when Yaa is Pro, provided Zaa is neither Pro nor hydroxyproline.. In terms of biological role, type IV dipeptidyl-peptidase which removes N-terminal dipeptides sequentially from polypeptides having unsubstituted N-termini provided that the penultimate residue is proline. The polypeptide is Probable dipeptidyl-aminopeptidase B (dapB) (Talaromyces stipitatus (strain ATCC 10500 / CBS 375.48 / QM 6759 / NRRL 1006) (Penicillium stipitatum)).